A 156-amino-acid polypeptide reads, in one-letter code: Transcription elongation factor GreA (156 aa).

Residues 1–84 adopt a coiled-coil conformation; that stretch reads MAKYTISKHR…IEDVLRSTDE (84 aa).

This sequence belongs to the GreA/GreB family.

Its function is as follows. Necessary for efficient RNA polymerase transcription elongation past template-encoded arresting sites. The arresting sites in DNA have the property of trapping a certain fraction of elongating RNA polymerases that pass through, resulting in locked ternary complexes. Cleavage of the nascent transcript by cleavage factors such as GreA or GreB allows the resumption of elongation from the new 3'terminus. GreA releases sequences of 2 to 3 nucleotides. The chain is Transcription elongation factor GreA from Ureaplasma parvum serovar 3 (strain ATCC 27815 / 27 / NCTC 11736).